The sequence spans 833 residues: Protein translocase subunit SecA (833 aa).

ATP is bound by residues glutamine 87, glycine 105–threonine 109, and aspartate 494. The interval proline 789 to asparagine 816 is disordered. The span at proline 806–arginine 815 shows a compositional bias: basic and acidic residues. Zn(2+) is bound by residues cysteine 819, cysteine 821, cysteine 830, and cysteine 831.

Belongs to the SecA family. In terms of assembly, monomer and homodimer. Part of the essential Sec protein translocation apparatus which comprises SecA, SecYEG and auxiliary proteins SecDF-YajC and YidC. It depends on Zn(2+) as a cofactor.

The protein resides in the cell inner membrane. It is found in the cytoplasm. It carries out the reaction ATP + H2O + cellular proteinSide 1 = ADP + phosphate + cellular proteinSide 2.. In terms of biological role, part of the Sec protein translocase complex. Interacts with the SecYEG preprotein conducting channel. Has a central role in coupling the hydrolysis of ATP to the transfer of proteins into and across the cell membrane, serving as an ATP-driven molecular motor driving the stepwise translocation of polypeptide chains across the membrane. The polypeptide is Protein translocase subunit SecA (Nitratidesulfovibrio vulgaris (strain DP4) (Desulfovibrio vulgaris)).